A 275-amino-acid chain; its full sequence is Leucine-rich repeat-containing protein 3C (275 aa).

A signal peptide spans M1–T41. The LRRNT domain maps to V42 to N79. LRR repeat units lie at residues D80 to H101, V104 to G125, and T129 to G150. An N-linked (GlcNAc...) asparagine glycan is attached at N156. The LRRCT domain occupies N160–S212. The chain crosses the membrane as a helical span at residues L225–W245.

This sequence belongs to the LRRC3 family.

Its subcellular location is the membrane. The polypeptide is Leucine-rich repeat-containing protein 3C (LRRC3C) (Homo sapiens (Human)).